We begin with the raw amino-acid sequence, 711 residues long: Polyribonucleotide nucleotidyltransferase (711 aa).

D486 and D492 together coordinate Mg(2+). Residues 553–612 form the KH domain; sequence PRIHTIKINPDKIKDVIGKGGSVIRALTEETGTTIEIEDDGTVKIAATDGEKAKHAIRRI. The S1 motif domain occupies 622 to 690; that stretch reads GRVYTGKVTR…RQGRIRLSIK (69 aa). The interval 689–711 is disordered; sequence IKEATEQSQPAAAPEAPAAEQGE. Positions 694-711 are enriched in low complexity; sequence EQSQPAAAPEAPAAEQGE.

It belongs to the polyribonucleotide nucleotidyltransferase family. Component of the RNA degradosome, which is a multiprotein complex involved in RNA processing and mRNA degradation. Mg(2+) serves as cofactor.

It is found in the cytoplasm. The enzyme catalyses RNA(n+1) + phosphate = RNA(n) + a ribonucleoside 5'-diphosphate. Involved in mRNA degradation. Catalyzes the phosphorolysis of single-stranded polyribonucleotides processively in the 3'- to 5'-direction. This Shigella boydii serotype 4 (strain Sb227) protein is Polyribonucleotide nucleotidyltransferase.